Consider the following 274-residue polypeptide: 2,3,4,5-tetrahydropyridine-2,6-dicarboxylate N-succinyltransferase (274 aa).

Arg104 and Asp141 together coordinate substrate.

This sequence belongs to the transferase hexapeptide repeat family. Homotrimer.

Its subcellular location is the cytoplasm. It carries out the reaction (S)-2,3,4,5-tetrahydrodipicolinate + succinyl-CoA + H2O = (S)-2-succinylamino-6-oxoheptanedioate + CoA. The protein operates within amino-acid biosynthesis; L-lysine biosynthesis via DAP pathway; LL-2,6-diaminopimelate from (S)-tetrahydrodipicolinate (succinylase route): step 1/3. The polypeptide is 2,3,4,5-tetrahydropyridine-2,6-dicarboxylate N-succinyltransferase (Shigella boydii serotype 4 (strain Sb227)).